The chain runs to 211 residues: Imidazole glycerol phosphate synthase subunit HisH (211 aa).

In terms of domain architecture, Glutamine amidotransferase type-1 spans 1–206 (MIGIIDYGRG…GKWVNEDATV (206 aa)). Cys-79 acts as the Nucleophile in catalysis. Residues His-181 and Glu-183 contribute to the active site.

In terms of assembly, heterodimer of HisH and HisF.

Its subcellular location is the cytoplasm. It catalyses the reaction 5-[(5-phospho-1-deoxy-D-ribulos-1-ylimino)methylamino]-1-(5-phospho-beta-D-ribosyl)imidazole-4-carboxamide + L-glutamine = D-erythro-1-(imidazol-4-yl)glycerol 3-phosphate + 5-amino-1-(5-phospho-beta-D-ribosyl)imidazole-4-carboxamide + L-glutamate + H(+). It carries out the reaction L-glutamine + H2O = L-glutamate + NH4(+). Its pathway is amino-acid biosynthesis; L-histidine biosynthesis; L-histidine from 5-phospho-alpha-D-ribose 1-diphosphate: step 5/9. Its function is as follows. IGPS catalyzes the conversion of PRFAR and glutamine to IGP, AICAR and glutamate. The HisH subunit catalyzes the hydrolysis of glutamine to glutamate and ammonia as part of the synthesis of IGP and AICAR. The resulting ammonia molecule is channeled to the active site of HisF. The sequence is that of Imidazole glycerol phosphate synthase subunit HisH from Desulfitobacterium hafniense (strain DSM 10664 / DCB-2).